The chain runs to 162 residues: Selenoprotein F (162 aa).

The first 28 residues, 1-28, serve as a signal peptide directing secretion; it reads MAAGQGGWLRPALGLRLLLATAFQAVSA. Residue Sec-93 is a non-standard amino acid, selenocysteine.

The protein belongs to the selenoprotein M/F family. In terms of assembly, forms a tight complex with UGGT1/UGCGL1. Interacts with UGGT2/UGCGL2. Interacts with RDH11.

It localises to the endoplasmic reticulum lumen. Its function is as follows. May be involved in redox reactions associated with the formation of disulfide bonds. May contribute to the quality control of protein folding in the endoplasmic reticulum. May regulate protein folding by enhancing the catalytic activity of UGGT1/UGCGL1 and UGGT2/UGCGL2. In Mus musculus (Mouse), this protein is Selenoprotein F.